Here is a 644-residue protein sequence, read N- to C-terminus: Exoribonuclease 2 (644 aa).

The 328-residue stretch at 189–516 folds into the RNB domain; it reads RQDLTALNFV…NHRLLKAVIK (328 aa). The S1 motif domain occupies 561 to 643; that stretch reads NTRFAAEIID…ETRSIIARPA (83 aa).

This sequence belongs to the RNR ribonuclease family. RNase II subfamily.

It localises to the cytoplasm. It carries out the reaction Exonucleolytic cleavage in the 3'- to 5'-direction to yield nucleoside 5'-phosphates.. Its function is as follows. Involved in mRNA degradation. Hydrolyzes single-stranded polyribonucleotides processively in the 3' to 5' direction. In Salmonella paratyphi A (strain ATCC 9150 / SARB42), this protein is Exoribonuclease 2.